Here is a 671-residue protein sequence, read N- to C-terminus: DNA ligase (671 aa).

NAD(+) contacts are provided by residues 32–36 (DAEYD), 81–82 (SL), and Glu113. The N6-AMP-lysine intermediate role is filled by Lys115. Positions 136, 173, 290, and 314 each coordinate NAD(+). Residues Cys408, Cys411, Cys426, and Cys432 each coordinate Zn(2+). In terms of domain architecture, BRCT spans 593–671 (EIDSPFAGKT…EAEMIRLLGA (79 aa)).

Belongs to the NAD-dependent DNA ligase family. LigA subfamily. Mg(2+) serves as cofactor. Requires Mn(2+) as cofactor.

It catalyses the reaction NAD(+) + (deoxyribonucleotide)n-3'-hydroxyl + 5'-phospho-(deoxyribonucleotide)m = (deoxyribonucleotide)n+m + AMP + beta-nicotinamide D-nucleotide.. In terms of biological role, DNA ligase that catalyzes the formation of phosphodiester linkages between 5'-phosphoryl and 3'-hydroxyl groups in double-stranded DNA using NAD as a coenzyme and as the energy source for the reaction. It is essential for DNA replication and repair of damaged DNA. This is DNA ligase from Salmonella paratyphi C (strain RKS4594).